Consider the following 187-residue polypeptide: Putative protein YbeM (187 aa).

One can recognise a CN hydrolase domain in the interval 1-163 (MMTTILTIHV…PALIMAEVTP (163 aa)).

Belongs to the carbon-nitrogen hydrolase superfamily. NIT1/NIT2 family.

In terms of biological role, pseudogene resulting from a nucleotide deletion that introduces a premature stop codon at position 66. This is the C-terminal fragment. The intact protein (AC A0A140NCB4) hydrolyzes deaminated glutathione (dGSH, 2-oxoglutaramate) to alpha-ketoglutarate (alpha-KG) and cysteinylglycine, has less activity against alpha-ketoglutaramate (a-KGM) and no activity on glutathione or L-glutamine. May function as a metabolite repair enzyme. This is Putative protein YbeM (ybeM) from Escherichia coli (strain K12).